Here is a 442-residue protein sequence, read N- to C-terminus: O-methyltransferase pgmB (442 aa).

S-adenosyl-L-methionine is bound at residue Asp291. The Proton acceptor role is filled by His341.

Belongs to the class I-like SAM-binding methyltransferase superfamily. Cation-independent O-methyltransferase family.

It functions in the pathway pigment biosynthesis. The protein operates within secondary metabolite biosynthesis. Its function is as follows. O-methyltransferase; part of the gene cluster that mediates the biosynthesis of pleosporalin A, ascomycone A, as well as a third cryptic naphthoquinone derived pigment, all responsible for the coloration of conidia. Specifically methylates position C-6 of the pgmA product 3-acetonyl-1,6,8-trihydroxy-2-naphthaldehyde to yield fusarubinaldehyde. The pathway begins with the biosynthesis of the cyclized heptaketide 3-acetonyl-1,6,8-trihydroxy-2-naphthaldehyde by the NR-PKS pgmA. The C-6 hydroxyl group is further methylated by the O-methyltransferase pgmB to yield fusarubinaldehyde which is in turn oxidized by the cytochrome P450 monooxygenase pgmC at C-9. The C-1 hydroxyl group is then methylated spontaneously. Although pgmE, pgmD and pgmH are essential for the production of pleosporalin A, it is not the case for the 2 other final products and it remains difficult to assign a specific function to each enzyme. PgmF and pgmG seem not to be involved in pigment biosynthesis although they were regulated by the cluster-specific transcription factor pgmR. In Aspergillus terreus, this protein is O-methyltransferase pgmB.